A 240-amino-acid polypeptide reads, in one-letter code: Ribose-5-phosphate isomerase (240 aa).

Residues 34 to 37 (SGST), 88 to 91 (DGAD), and 101 to 104 (KGGG) contribute to the substrate site. Residue E110 is the Proton acceptor of the active site. K128 provides a ligand contact to substrate.

Belongs to the ribose 5-phosphate isomerase family.

It is found in the cytoplasm. The enzyme catalyses aldehydo-D-ribose 5-phosphate = D-ribulose 5-phosphate. It participates in carbohydrate degradation; pentose phosphate pathway; D-ribose 5-phosphate from D-ribulose 5-phosphate (non-oxidative stage): step 1/1. Its function is as follows. Involved in the first step of the non-oxidative branch of the pentose phosphate pathway. It catalyzes the reversible conversion of ribose-5-phosphate to ribulose 5-phosphate. This chain is Ribose-5-phosphate isomerase (RKI1), found in Candida albicans (strain SC5314 / ATCC MYA-2876) (Yeast).